Here is a 741-residue protein sequence, read N- to C-terminus: uncharacterized protein (741 aa).

The stretch at V64–V103 forms a coiled coil. Over residues F137–L155 the composition is skewed to polar residues. Disordered stretches follow at residues F137–P214, R280–S318, and S330–P364. 2 stretches are compositionally biased toward low complexity: residues R161 to T173 and K197 to A209. The span at S298 to P308 shows a compositional bias: polar residues. 2 stretches are compositionally biased toward low complexity: residues S309–S318 and S330–S344. Positions P346 to A356 are enriched in polar residues. Position 499–506 (G499–T506) interacts with ATP.

It belongs to the AAA ATPase family.

The protein localises to the cytoplasm. It localises to the nucleus. This is an uncharacterized protein from Schizosaccharomyces pombe (strain 972 / ATCC 24843) (Fission yeast).